The following is a 552-amino-acid chain: Scaffold protein (552 aa).

It belongs to the poxviridae protein D13 family. In terms of assembly, homotrimer. Self-assembles to form a layer. Interacts with A17 (via N-terminus); this interaction is necessary for D13 association with membranes.

The protein resides in the membrane. Its function is as follows. Scaffold protein which forms a transitory spherical honeycomb lattice providing curvature and rigidity to the convex membrane of crescent and immature virions (IV). This association occurs concomitantly with viral membrane formation. Targeted by the drug rifampicin, which prevents the formation of this lattice, and hence virus morphogenesis. In the presence of rifampicin, irregularly shaped membranes that lack the honeycomb layer accumulate around areas of electron-dense viroplasm. This layer is lost from virions during maturation from IV to mature virion (MV), through the proteolysis of A17 N-terminus. The protein is Scaffold protein of Vertebrata (FPV).